The chain runs to 66 residues: Large ribosomal subunit protein bL31 (66 aa).

Residues Cys16, Cys18, Cys36, and Cys39 each coordinate Zn(2+).

It belongs to the bacterial ribosomal protein bL31 family. Type A subfamily. As to quaternary structure, part of the 50S ribosomal subunit. Requires Zn(2+) as cofactor.

Binds the 23S rRNA. This chain is Large ribosomal subunit protein bL31, found in Campylobacter hominis (strain ATCC BAA-381 / DSM 21671 / CCUG 45161 / LMG 19568 / NCTC 13146 / CH001A).